An 842-amino-acid chain; its full sequence is Leucine--tRNA ligase (842 aa).

Residues 62–72 (PYPSGDLHMGH) carry the 'HIGH' region motif. Residues 390–414 (GDEDPAETGVATAGEGTLKNSGELD) form a disordered region. The short motif at 607–611 (AMSKS) is the 'KMSKS' region element. ATP is bound at residue lysine 610.

The protein belongs to the class-I aminoacyl-tRNA synthetase family.

It localises to the cytoplasm. The catalysed reaction is tRNA(Leu) + L-leucine + ATP = L-leucyl-tRNA(Leu) + AMP + diphosphate. This Paenarthrobacter aurescens (strain TC1) protein is Leucine--tRNA ligase.